The following is a 353-amino-acid chain: 3-ketosteroid-9-alpha-monooxygenase, ferredoxin reductase component (353 aa).

The FAD-binding FR-type domain maps to 8 to 117; sequence SHVLELQVAE…LAPSGTFVPK (110 aa). The region spanning 264–353 is the 2Fe-2S ferredoxin-type domain; the sequence is ATAVVTLDGT…SDSVEVTYDE (90 aa). 4 residues coordinate [2Fe-2S] cluster: cysteine 300, cysteine 305, cysteine 308, and cysteine 338.

Monomer. The two-component system 3-ketosteroid-9-alpha-monooxygenase is composed of an oxygenase component KshA and a reductase component KshB. The cofactor is FAD. [2Fe-2S] cluster is required as a cofactor.

It carries out the reaction androsta-1,4-diene-3,17-dione + 2 reduced [2Fe-2S]-[ferredoxin] + O2 + 2 H(+) = 9alpha-hydroxyandrosta-1,4-diene-3,17-dione + 2 oxidized [2Fe-2S]-[ferredoxin] + H2O. It functions in the pathway lipid metabolism; steroid biosynthesis. Functionally, involved in the degradation of cholesterol. Catalyzes the introduction of a 9a-hydroxyl moiety into 1,4-androstadiene-3,17-dione (ADD) to yield the 9alpha-hydroxy-1,4-androstadiene-3,17-dione (9OHADD) intermediate which spontaneously form 3-hydroxy-9,10-seconandrost-1,3,5(10)-triene-9,17-dione (HSA) via the meta-cleavage of ring B with concomitant aromatization of ring A. This Mycolicibacterium smegmatis (strain ATCC 700084 / mc(2)155) (Mycobacterium smegmatis) protein is 3-ketosteroid-9-alpha-monooxygenase, ferredoxin reductase component (kshB).